The chain runs to 214 residues: Oocyte zinc finger protein XlCOF10 (214 aa).

7 C2H2-type zinc fingers span residues 1–23 (FSCS…RQLH), 29–51 (FTCS…HRIH), 57–79 (FTCD…QKSH), 85–107 (FCCS…QRTH), 113–135 (FTCT…QKSH), 141–163 (FSCS…QRIH), and 169–191 (FSCS…EKCH).

It belongs to the krueppel C2H2-type zinc-finger protein family.

The protein resides in the nucleus. Functionally, may be involved in transcriptional regulation. The chain is Oocyte zinc finger protein XlCOF10 from Xenopus laevis (African clawed frog).